A 542-amino-acid chain; its full sequence is Ribonuclease Y (542 aa).

The chain crosses the membrane as a helical span at residues 1–21 (MLIALIAVSVLAVAAIIGSLA). A disordered region spans residues 52-92 (SRASQDLADSRKDVAKARAELESSRTRASDEARRADNADQA). Over residues 59–92 (ADSRKDVAKARAELESSRTRASDEARRADNADQA) the composition is skewed to basic and acidic residues. The 61-residue stretch at 229–289 (VVSVVPLPSN…MRREVARQAL (61 aa)) folds into the KH domain. In terms of domain architecture, HD spans 355–449 (VLDHCVECAR…VKAADAISAA (95 aa)).

Belongs to the RNase Y family.

It is found in the cell membrane. Its function is as follows. Endoribonuclease that initiates mRNA decay. The chain is Ribonuclease Y from Cutibacterium acnes (strain DSM 16379 / KPA171202) (Propionibacterium acnes).